A 386-amino-acid polypeptide reads, in one-letter code: Lycopene beta-cyclase (386 aa).

An NAD(+)-binding site is contributed by 4 to 34; sequence DVLLAGAGLANGLIALALRAARPDLRVLLLD.

Belongs to the lycopene cyclase family. Requires FAD as cofactor.

The catalysed reaction is a carotenoid psi-end group = a carotenoid beta-end derivative. The enzyme catalyses all-trans-lycopene = gamma-carotene. It carries out the reaction gamma-carotene = all-trans-beta-carotene. The protein operates within carotenoid biosynthesis; astaxanthin biosynthesis. Functionally, catalyzes the double cyclization reaction which converts lycopene to beta-carotene. This chain is Lycopene beta-cyclase, found in Paracoccus sp. (strain N81106 / MBIC 01143) (Agrobacterium aurantiacum).